The sequence spans 394 residues: MTLFTVSCLLVVLFLCHSLVHAENNGYYGYTPTVANYLPEKPQNIMNPVDSCWRLKSDWAANRKDLADCVVGFGSSTLGGKKGNLYVVTNPYDNAQNPQPGSLRYGVIQAKPLWITFAKDMVITLENELMVNSYKTIDGRGAKVEIAYGPCITIQDVTNVIVHGISIHDCKPGKYGMVRSSPTHVGHRKGSDGDAIAIFGSSNIWIDHCYLASCTDGLIDVIHASTGITISNNYFTQHDKVMLLGHNDDFVQDVKMKVTVAFNHFGPGLVERMPRVRRGYAHVANNRYDKWIMYAIGGSADPTIFSEGNYFIASDKSNSKEVTKREVKGGWNNWRWRTSKDVFKNGAYFVPSGYGSISLPYSSAQRFTVAPGNLVPSLTADAGPLNCNRNGPCY.

A signal peptide spans 1-22; the sequence is MTLFTVSCLLVVLFLCHSLVHA. Ca(2+)-binding residues include aspartate 192, aspartate 216, and aspartate 220. Residue arginine 272 is part of the active site.

The protein belongs to the polysaccharide lyase 1 family. The cofactor is Ca(2+).

It catalyses the reaction Eliminative cleavage of (1-&gt;4)-alpha-D-galacturonan to give oligosaccharides with 4-deoxy-alpha-D-galact-4-enuronosyl groups at their non-reducing ends.. It participates in glycan metabolism; pectin degradation; 2-dehydro-3-deoxy-D-gluconate from pectin: step 2/5. The protein is Probable pectate lyase 16 of Arabidopsis thaliana (Mouse-ear cress).